Here is a 756-residue protein sequence, read N- to C-terminus: Amine oxidase [copper-containing] 2 (756 aa).

Residues 1 to 4 (MHLK) are Cytoplasmic-facing. Residues 5–25 (IVLAFLALSLITIFALAYVLL) form a helical membrane-spanning segment. At 26 to 756 (TSPGGSSQPP…DLPPFSYHGF (731 aa)) the chain is on the extracellular side. N-linked (GlcNAc...) asparagine glycosylation is found at Asn133, Asn198, and Asn226. Asp380 functions as the Proton acceptor in the catalytic mechanism. A disulfide bond links Cys398 and Cys424. The active-site Schiff-base intermediate with substrate; via topaquinone is the Tyr465. Tyr465 carries the post-translational modification 2',4',5'-topaquinone. Positions 516 and 518 each coordinate Cu(2+). Ca(2+)-binding residues include Asp525, Leu526, Asp527, Glu568, Glu637, Phe659, and Asn661. An N-linked (GlcNAc...) asparagine glycan is attached at Asn662. Residues Glu663, Asp669, and Leu670 each contribute to the Ca(2+) site. Position 680 (His680) interacts with Cu(2+). Residues Cys730 and Cys737 are joined by a disulfide bond.

Belongs to the copper/topaquinone oxidase family. Homodimer; disulfide-linked. Probably forms heterodimers with AOC3. Requires Cu(2+) as cofactor. The cofactor is Ca(2+). L-topaquinone serves as cofactor. Topaquinone (TPQ) is generated by copper-dependent autoxidation of a specific tyrosyl residue. In terms of tissue distribution, expressed in many tissues including adipocytes with higher expression in retina where it is active. As to expression, not expressed in testis. Not expressed in thymus.

It is found in the cell membrane. It localises to the cytoplasm. The catalysed reaction is 2-phenylethylamine + O2 + H2O = 2-phenylacetaldehyde + H2O2 + NH4(+). It carries out the reaction tryptamine + O2 + H2O = indole-3-acetaldehyde + H2O2 + NH4(+). The enzyme catalyses tyramine + O2 + H2O = (4-hydroxyphenyl)acetaldehyde + H2O2 + NH4(+). Its function is as follows. Catalyzes the oxidative deamination of primary amines to the corresponding aldehydes with the concomitant production of hydrogen peroxide and ammonia. Has a preference for 2-phenylethylamine, tryptamine and tyramine. Could also act on methylamine and benzylamine but much less efficiently. The chain is Amine oxidase [copper-containing] 2 from Homo sapiens (Human).